Reading from the N-terminus, the 133-residue chain is Small ribosomal subunit protein uS8 (133 aa).

This sequence belongs to the universal ribosomal protein uS8 family. As to quaternary structure, part of the 30S ribosomal subunit. Contacts proteins S5 and S12.

Functionally, one of the primary rRNA binding proteins, it binds directly to 16S rRNA central domain where it helps coordinate assembly of the platform of the 30S subunit. The sequence is that of Small ribosomal subunit protein uS8 from Koribacter versatilis (strain Ellin345).